Here is a 173-residue protein sequence, read N- to C-terminus: Translation initiation factor IF-3 (173 aa).

Belongs to the IF-3 family. In terms of assembly, monomer.

The protein resides in the cytoplasm. Its function is as follows. IF-3 binds to the 30S ribosomal subunit and shifts the equilibrium between 70S ribosomes and their 50S and 30S subunits in favor of the free subunits, thus enhancing the availability of 30S subunits on which protein synthesis initiation begins. The chain is Translation initiation factor IF-3 from Bacillus subtilis (strain 168).